A 32-amino-acid chain; its full sequence is Sodium channel neurotoxin BmK NT2 (32 aa).

Residues 2 to 32 (RDAYIAKPENCVYHCAGNEGCNNLCTCNGAT) form the LCN-type CS-alpha/beta domain.

Expressed by the venom gland.

The protein localises to the secreted. Alpha toxins bind voltage-independently at site-3 of sodium channels (Nav) and inhibit the inactivation of the activated channels, thereby blocking neuronal transmission. This toxin dose-dependently delays inactivation of voltage-gated sodium channels (Nav) (EC(50)=0.91 uM), and shifts the steady-state activation and inactivation to hyperpolarized direction. In addition, it dose-dependently alters calcium dynamics and increases phosphorylation of MAP kinases 1/3 (MAPK1/MAPK3) and cAMP-response element binding (CREB) proteins in neocortical neurons. This effect is eliminated by tetrodotoxin, a Nav blocker. This is Sodium channel neurotoxin BmK NT2 from Olivierus martensii (Manchurian scorpion).